We begin with the raw amino-acid sequence, 156 residues long: Small ribosomal subunit protein uS7 (156 aa).

It belongs to the universal ribosomal protein uS7 family. As to quaternary structure, part of the 30S ribosomal subunit. Contacts proteins S9 and S11.

One of the primary rRNA binding proteins, it binds directly to 16S rRNA where it nucleates assembly of the head domain of the 30S subunit. Is located at the subunit interface close to the decoding center, probably blocks exit of the E-site tRNA. This chain is Small ribosomal subunit protein uS7, found in Rhodospirillum centenum (strain ATCC 51521 / SW).